The primary structure comprises 206 residues: FMN-dependent NADH:quinone oxidoreductase 1 (206 aa).

FMN contacts are provided by residues Ser10 and 16–18; that span reads SLS.

This sequence belongs to the azoreductase type 1 family. Homodimer. FMN serves as cofactor.

It catalyses the reaction 2 a quinone + NADH + H(+) = 2 a 1,4-benzosemiquinone + NAD(+). It carries out the reaction N,N-dimethyl-1,4-phenylenediamine + anthranilate + 2 NAD(+) = 2-(4-dimethylaminophenyl)diazenylbenzoate + 2 NADH + 2 H(+). Quinone reductase that provides resistance to thiol-specific stress caused by electrophilic quinones. Its function is as follows. Also exhibits azoreductase activity. Catalyzes the reductive cleavage of the azo bond in aromatic azo compounds to the corresponding amines. The protein is FMN-dependent NADH:quinone oxidoreductase 1 of Burkholderia lata (strain ATCC 17760 / DSM 23089 / LMG 22485 / NCIMB 9086 / R18194 / 383).